The following is a 527-amino-acid chain: Pyruvate kinase 1, cytosolic (527 aa).

Substrate is bound at residue Arg-58. The K(+) site is built by Asp-60, Ser-62, Asp-92, and Thr-93. 60–63 (DFSW) contributes to the ATP binding site. Lys-256 serves as a coordination point for substrate. Mg(2+) is bound at residue Glu-258. Substrate-binding residues include Gly-281, Asn-282, and Thr-313. Asn-282 serves as a coordination point for Mg(2+).

The protein belongs to the pyruvate kinase family. In terms of assembly, homotetramer. The cofactor is Mg(2+). It depends on K(+) as a cofactor.

The protein resides in the cytoplasm. The protein localises to the cytosol. It catalyses the reaction pyruvate + ATP = phosphoenolpyruvate + ADP + H(+). The protein operates within carbohydrate degradation; glycolysis; pyruvate from D-glyceraldehyde 3-phosphate: step 5/5. Its function is as follows. Key regulatory enzyme of the glycolytic pathway that catalyzes the final step of glycolysis, converting ADP and phosphoenolpyruvate (PEP) to ATP and pyruvate by essentially irreversible transphosphorylation. Is critical for plant growth and development. This Oryza sativa subsp. indica (Rice) protein is Pyruvate kinase 1, cytosolic.